The sequence spans 509 residues: MDIDVGPVDPSVLYEQDLHVSSAVWEGQERGLLRCQEHTSLLHQWKLTDEQINLVDKAGFGYFRKIGPMSLNNSLISALVERWRRETNTFHLPLGEMTITLDEVALVLGLEIDGDPIVGSKVGDEVAMDMCGRLLGKLPSAANKEVNCSRVKLNWLKRTFSECPEDASFDVVKCHTRAYLLYLIGSTIFATTDGDKVSVKYLPLFEDFDQAGRYAWGAAALACLYRALGNASLKSQSNICGCLTLLQCWSYFHLDIGRPEKSEACFPLALLWKGKGSRSKTDLSEYRRELDDLDPSKITWCPYERFENLIPPHIKAKLILGRSKTTLVCFEKIELHFPDRCLRQFGKRQPIPLKVKRRDRKNRRLDDLDTSMSLACEEWAERGDHIVDSPGGGNVVDDGAYMEWYARISITKLYREAFLESQVMNMIACMREFEEAASGIALERLSPAEREVMESVKDTFANSLTFGGWQEVAVNSGYGKRRRRNEHTPTPNNGGGNDISSLLLQKEDS.

The interval 477-509 (GYGKRRRRNEHTPTPNNGGGNDISSLLLQKEDS) is disordered. The span at 488 to 503 (TPTPNNGGGNDISSLL) shows a compositional bias: polar residues.

As to expression, expressed in root tips, the shoot apical meristem (SAM), leaves, mature flowers and embryos.

The protein resides in the nucleus. Its function is as follows. Acts as an important factor for cell fate determination and maintenance throughout plant development. Required for the organization of the root apical meristem (RAM) and the shoot apical meristem (SAM). Required to maintain genome stability and cell division activity in meristematic cells. This is Protein MAIN-LIKE 1 from Arabidopsis thaliana (Mouse-ear cress).